A 62-amino-acid chain; its full sequence is Large ribosomal subunit protein bL28 (62 aa).

The tract at residues 1 to 28 is disordered; that stretch reads MARVCAITGRKARSGNSRSHAMNATKRK.

The protein belongs to the bacterial ribosomal protein bL28 family.

The chain is Large ribosomal subunit protein bL28 from Bacillus cytotoxicus (strain DSM 22905 / CIP 110041 / 391-98 / NVH 391-98).